Here is a 282-residue protein sequence, read N- to C-terminus: Phosphatidylglycerol--prolipoprotein diacylglyceryl transferase (282 aa).

The next 4 membrane-spanning stretches (helical) occupy residues 19–39, 59–79, 90–110, and 120–140; these read IGPITIRWYGLLIATAVLIGV, LSIWLVIGAIPAARIYYVLFQ, IIAIWQGGIAIHGAIIGGTLA, and VPFWQLADLVAPSLILGQAIG. Position 141 (Arg-141) interacts with a 1,2-diacyl-sn-glycero-3-phospho-(1'-sn-glycerol). 3 helical membrane-spanning segments follow: residues 181-201, 212-232, and 245-265; these read TFLYESIWDLMVFALLITLFF, VGTLFMVYLATYSLGRLWIEG, and IAQVVSLTGITLGLAGLAWLY.

It belongs to the Lgt family.

It localises to the cell inner membrane. It catalyses the reaction L-cysteinyl-[prolipoprotein] + a 1,2-diacyl-sn-glycero-3-phospho-(1'-sn-glycerol) = an S-1,2-diacyl-sn-glyceryl-L-cysteinyl-[prolipoprotein] + sn-glycerol 1-phosphate + H(+). It functions in the pathway protein modification; lipoprotein biosynthesis (diacylglyceryl transfer). Functionally, catalyzes the transfer of the diacylglyceryl group from phosphatidylglycerol to the sulfhydryl group of the N-terminal cysteine of a prolipoprotein, the first step in the formation of mature lipoproteins. This chain is Phosphatidylglycerol--prolipoprotein diacylglyceryl transferase, found in Trichormus variabilis (strain ATCC 29413 / PCC 7937) (Anabaena variabilis).